We begin with the raw amino-acid sequence, 337 residues long: Tetraacyldisaccharide 4'-kinase (337 aa).

Thr-52–Thr-59 lines the ATP pocket.

Belongs to the LpxK family.

The catalysed reaction is a lipid A disaccharide + ATP = a lipid IVA + ADP + H(+). Its pathway is glycolipid biosynthesis; lipid IV(A) biosynthesis; lipid IV(A) from (3R)-3-hydroxytetradecanoyl-[acyl-carrier-protein] and UDP-N-acetyl-alpha-D-glucosamine: step 6/6. In terms of biological role, transfers the gamma-phosphate of ATP to the 4'-position of a tetraacyldisaccharide 1-phosphate intermediate (termed DS-1-P) to form tetraacyldisaccharide 1,4'-bis-phosphate (lipid IVA). This Methylobacterium nodulans (strain LMG 21967 / CNCM I-2342 / ORS 2060) protein is Tetraacyldisaccharide 4'-kinase.